A 660-amino-acid polypeptide reads, in one-letter code: Junctophilin-1 (660 aa).

The Cytoplasmic portion of the chain corresponds to 1–638 (MTGGRFDFDD…EKEANSGPNS (638 aa)). MORN repeat units follow at residues 14 to 36 (YCGGWEEGKAHGHGICTGPKGQG), 38 to 59 (YSGSWSHGFEVVGVYTWPSGNT), 60 to 82 (YQGYWAQGKRHGLGVETKGKWMY), 106 to 128 (YEGTWSNGLQDGYGVETYGDGGT), and 129 to 151 (YQGQWAGGMRHGYGVRQSVPYGM). Phosphoserine is present on residues Ser-157, Ser-216, and Ser-220. The segment at 228–247 (SKSSISSKRSSVRSDAAMSR) is disordered. MORN repeat units follow at residues 281 to 303 (YMGEWKNDKRNGFGISERSNGMK) and 304 to 326 (YEGEWANNKRHGYGCTVFPDGSK). Residues 437–454 (NPEEKVLEKPPSPKESPH) are compositionally biased toward basic and acidic residues. Positions 437–631 (NPEEKVLEKP…NDTCPSLEKE (195 aa)) are disordered. Position 452 is a phosphoserine (Ser-452). Thr-461 carries the phosphothreonine modification. Phosphoserine is present on residues Ser-465, Ser-469, and Ser-475. Positions 466 to 477 (PESSPKQSHSPQ) are enriched in low complexity. Basic and acidic residues-rich tracts occupy residues 562–571 (PPEDREDDRG) and 598–612 (VAKESKTEPKAKKSE). The chain crosses the membrane as a helical; Anchor for type IV membrane protein span at residues 639–659 (IMIVLVMLLNIGLAILFVHFL).

This sequence belongs to the junctophilin family. In terms of tissue distribution, specifically expressed in skeletal muscle. Weakly expressed in embryos and neonates. Abundant in young adult muscles.

It is found in the cell membrane. It localises to the endoplasmic reticulum membrane. Its subcellular location is the sarcoplasmic reticulum membrane. In terms of biological role, junctophilins contribute to the formation of junctional membrane complexes (JMCs) which link the plasma membrane with the endoplasmic or sarcoplasmic reticulum in excitable cells. Provides a structural foundation for functional cross-talk between the cell surface and intracellular calcium release channels. JPH1 contributes to the construction of the skeletal muscle triad by linking the t-tubule (transverse-tubule) and SR (sarcoplasmic reticulum) membranes. This chain is Junctophilin-1 (Jph1), found in Mus musculus (Mouse).